A 184-amino-acid polypeptide reads, in one-letter code: UPF0398 protein OB1025 (184 aa).

Belongs to the UPF0398 family.

The protein is UPF0398 protein OB1025 of Oceanobacillus iheyensis (strain DSM 14371 / CIP 107618 / JCM 11309 / KCTC 3954 / HTE831).